Here is an 861-residue protein sequence, read N- to C-terminus: Glucans biosynthesis glucosyltransferase H (861 aa).

The next 6 membrane-spanning stretches (helical) occupy residues 142–162, 188–208, 516–536, 573–593, 600–620, and 683–703; these read FILL…MKGI, VLPY…FCWV, VFLT…FLVL, LFST…MLIW, FGGV…SVLL, and FLWW…VSVI.

It belongs to the glycosyltransferase 2 family. OpgH subfamily.

The protein localises to the cell inner membrane. The protein operates within glycan metabolism; osmoregulated periplasmic glucan (OPG) biosynthesis. Its function is as follows. Involved in the biosynthesis of osmoregulated periplasmic glucans (OPGs). The sequence is that of Glucans biosynthesis glucosyltransferase H from Pseudomonas aeruginosa (strain UCBPP-PA14).